An 858-amino-acid polypeptide reads, in one-letter code: Conidiophore development regulator abaA (858 aa).

Residues 1–22 form a disordered region; that stretch reads MSSSLYHPRPVLSSQRYTPSPD. Residues 128–221 constitute a DNA-binding region (TEA); that stretch reads QKDKGGVWRR…QVVKKFFEDL (94 aa). The span at 500-522 shows a compositional bias: basic and acidic residues; that stretch reads VEHQRKKEKRTKGDDRKNLDRAG. Disordered stretches follow at residues 500–535 and 792–858; these read VEHQ…GDAA and TGAG…AGGW. The Nuclear localization signal signature appears at 514–521; it reads DRKNLDRA. The span at 809–822 shows a compositional bias: polar residues; the sequence is SSDQTALWTQSQWA.

It belongs to the TEC1 family.

It localises to the nucleus. Functionally, abaA and wetA are pivotal regulators of conidiophore development and conidium maturation. They act individually and together to regulate their own expression and that of numerous other sporulation-specific genes. Binds to the sequence 5'-CATTCY-3', where Y is a pyrimidine, making both major- and minor-groove contacts. Plays a pivotal role in conidiation by regulating cell cycle pathways and other conidiation-related genes. This is Conidiophore development regulator abaA from Gibberella zeae (strain ATCC MYA-4620 / CBS 123657 / FGSC 9075 / NRRL 31084 / PH-1) (Wheat head blight fungus).